A 532-amino-acid chain; its full sequence is 2,3-bisphosphoglycerate-independent phosphoglycerate mutase (532 aa).

Positions 15 and 65 each coordinate Mn(2+). The active-site Phosphoserine intermediate is the S65. Residues H126, R156–D157, R188, R194, R258–R261, and K331 each bind substrate. The Mn(2+) site is built by D398, H402, D439, H440, and H457.

The protein belongs to the BPG-independent phosphoglycerate mutase family. As to quaternary structure, monomer. It depends on Mn(2+) as a cofactor.

The catalysed reaction is (2R)-2-phosphoglycerate = (2R)-3-phosphoglycerate. The protein operates within carbohydrate degradation; glycolysis; pyruvate from D-glyceraldehyde 3-phosphate: step 3/5. Its function is as follows. Catalyzes the interconversion of 2-phosphoglycerate and 3-phosphoglycerate. This Microcystis aeruginosa (strain NIES-843 / IAM M-2473) protein is 2,3-bisphosphoglycerate-independent phosphoglycerate mutase.